The primary structure comprises 778 residues: MNQENKVLPLIPLRGLIVFPYMVVHFDVGRDKSIEALEKAMMNDQQIFLSTQKDAKIEEPNEDDINSVGTICSIKQILRLPGDAVRVLVEGISRGKIDKYLKQEPFIEAEITEFKDEDNYEEYEIKALMRIITKEFGKYVKLSGAVTKDAVDFLKDIKEPGKFADIVSSYLIIKQEQKQSVLNSIDEKERLENVLTVIKDELQILELERNIGVKVKEKIDKSQREYYLREQIKVMQDQLGDDDEEKAEIKEYTQKIKKGKLTKEAKEKALHELKKLENAGAYSPEGAGIKTYLDWILSLPWKDKTKDNLDIKRAREILNKEHYGLSDVKDRIIEYLAVKKMSKSLKGPILCLVGPPGVGKTSIAKSIANAVNRNFVRISLGGVNDEAEIRGHRRTYVGAIPGRIIYGMKQAKSNNPLMLLDEIDKMSSSYKGESADALLEVLDTSENNKFRDNYLELDFDLSDVMFVTTANTLETIPRPLMDRMEIIEVSGYTYEEKFHIAKEHLIPKQLEEHNMPEDKKITFMDSSIYYIIENYTRESGVRSLERKIAAIIRKIITEIVEKDKSSISVNSRTVKKYLGEDVFSADKIDKEDKIGVVTGMAWTAYGGDTLPVEAVIMPGNGKLQLTGQLGDVMKESAQAGYSYVRANSVKYGIDKEFYKNKDIHVHVPEGAVPKDGPSAGVTMITAMVSALSDKKVKHNVAMTGEITLTGRVLAIGGLKEKTLAAYRAGVDTIIIPKQNEKDINKVPKAIRGKIKFILAEEVDTVLENALIGGINNDN.

Residues 8 to 202 (LPLIPLRGLI…NVLTVIKDEL (195 aa)) form the Lon N-terminal domain. 354–361 (GPPGVGKT) serves as a coordination point for ATP. The 182-residue stretch at 591-772 (EDKIGVVTGM…DTVLENALIG (182 aa)) folds into the Lon proteolytic domain. Active-site residues include serine 678 and lysine 721.

This sequence belongs to the peptidase S16 family. In terms of assembly, homohexamer. Organized in a ring with a central cavity.

The protein resides in the cytoplasm. The enzyme catalyses Hydrolysis of proteins in presence of ATP.. Its function is as follows. ATP-dependent serine protease that mediates the selective degradation of mutant and abnormal proteins as well as certain short-lived regulatory proteins. Required for cellular homeostasis and for survival from DNA damage and developmental changes induced by stress. Degrades polypeptides processively to yield small peptide fragments that are 5 to 10 amino acids long. Binds to DNA in a double-stranded, site-specific manner. The polypeptide is Lon protease (Clostridium acetobutylicum (strain ATCC 824 / DSM 792 / JCM 1419 / IAM 19013 / LMG 5710 / NBRC 13948 / NRRL B-527 / VKM B-1787 / 2291 / W)).